The following is a 1065-amino-acid chain: DNA-directed RNA polymerase subunit beta (1065 aa).

It belongs to the RNA polymerase beta chain family. As to quaternary structure, in plastids the minimal PEP RNA polymerase catalytic core is composed of four subunits: alpha, beta, beta', and beta''. When a (nuclear-encoded) sigma factor is associated with the core the holoenzyme is formed, which can initiate transcription.

The protein resides in the plastid. It localises to the chloroplast. It catalyses the reaction RNA(n) + a ribonucleoside 5'-triphosphate = RNA(n+1) + diphosphate. Its function is as follows. DNA-dependent RNA polymerase catalyzes the transcription of DNA into RNA using the four ribonucleoside triphosphates as substrates. The sequence is that of DNA-directed RNA polymerase subunit beta from Marchantia polymorpha (Common liverwort).